The following is a 380-amino-acid chain: Cytochrome b (380 aa).

A run of 4 helical transmembrane segments spans residues 33–53 (FGSL…FLAM), 77–98 (WLIR…YMHI), 113–133 (WNIG…GYVL), and 178–198 (FFAF…LHLL). His83 and His97 together coordinate heme b. Positions 182 and 196 each coordinate heme b. His201 lines the a ubiquinone pocket. 4 helical membrane passes run 226 to 246 (YKDL…ALFA), 288 to 308 (LGGV…PFLH), 320 to 340 (LTQM…WIGG), and 347 to 367 (FIII…VLFP).

Belongs to the cytochrome b family. In terms of assembly, the cytochrome bc1 complex contains 3 respiratory subunits (MT-CYB, CYC1 and UQCRFS1), 2 core proteins (UQCRC1 and UQCRC2) and probably 6 low-molecular weight proteins. Heme b serves as cofactor.

It is found in the mitochondrion inner membrane. Component of the ubiquinol-cytochrome c reductase complex (complex III or cytochrome b-c1 complex) that is part of the mitochondrial respiratory chain. The b-c1 complex mediates electron transfer from ubiquinol to cytochrome c. Contributes to the generation of a proton gradient across the mitochondrial membrane that is then used for ATP synthesis. This is Cytochrome b (mt-cyb) from Gadus morhua (Atlantic cod).